The following is a 478-amino-acid chain: Aspartyl/glutamyl-tRNA(Asn/Gln) amidotransferase subunit B (478 aa).

This sequence belongs to the GatB/GatE family. GatB subfamily. As to quaternary structure, heterotrimer of A, B and C subunits.

The enzyme catalyses L-glutamyl-tRNA(Gln) + L-glutamine + ATP + H2O = L-glutaminyl-tRNA(Gln) + L-glutamate + ADP + phosphate + H(+). It carries out the reaction L-aspartyl-tRNA(Asn) + L-glutamine + ATP + H2O = L-asparaginyl-tRNA(Asn) + L-glutamate + ADP + phosphate + 2 H(+). In terms of biological role, allows the formation of correctly charged Asn-tRNA(Asn) or Gln-tRNA(Gln) through the transamidation of misacylated Asp-tRNA(Asn) or Glu-tRNA(Gln) in organisms which lack either or both of asparaginyl-tRNA or glutaminyl-tRNA synthetases. The reaction takes place in the presence of glutamine and ATP through an activated phospho-Asp-tRNA(Asn) or phospho-Glu-tRNA(Gln). This is Aspartyl/glutamyl-tRNA(Asn/Gln) amidotransferase subunit B from Brevibacillus brevis (strain 47 / JCM 6285 / NBRC 100599).